We begin with the raw amino-acid sequence, 654 residues long: Interferon-induced GTP-binding protein Mx1 (654 aa).

Position 1 is an N-acetylmethionine (methionine 1). Composition is skewed to basic and acidic residues over residues 1 to 12 and 23 to 32; these read MVLSDLDIKEPD and DMVREHETES. The interval 1–33 is disordered; the sequence is MVLSDLDIKEPDSPESGLNGSDDMVREHETESK. The Dynamin-type G domain occupies 62–335; sequence DLALPAIAVI…LIMHICKTLP (274 aa). Residues 72–79 are G1 motif; the sequence is GDQSSGKS. 72 to 79 serves as a coordination point for GTP; sequence GDQSSGKS. The tract at residues 97–99 is G2 motif; that stretch reads VTR. A G3 motif region spans residues 173–176; that stretch reads DLPG. GTP is bound by residues 173-177 and 242-245; these read DLPGI and TKPD. A G4 motif region spans residues 242-245; the sequence is TKPD. Residues 274 to 277 are G5 motif; sequence KCRG. Residues 336–361 form a bundle signaling element (BSE) region; it reads LLENQIKETHQRITEELQKYGKDIPE. Residues 361 to 528 are middle domain; that stretch reads EEESEKMFSL…HFQMEQLVYC (168 aa). Positions 362–624 are stalk; that stretch reads EESEKMFSLI…KDQYDWLLKE (263 aa). Positions 544-563 are disordered; sequence EAEEEKKKKSNHYYQSEDSE. Residues 549–552 are critical for lipid-binding; sequence KKKK. The GED domain maps to 566–654; that stretch reads TAEIFQHLMA…ARQRLAKFPG (89 aa).

It belongs to the TRAFAC class dynamin-like GTPase superfamily. Dynamin/Fzo/YdjA family. Homooligomer. Oligomerizes into multimeric filamentous or ring-like structures by virtue of its stalk domain. Oligomerization is critical for GTPase activity, protein stability, and recognition of viral target structures. Interacts with TRPC1, TRPC3, TRPC4, TRPC5, TRPC6 and TRPC7. Interacts with HSPA5. Interacts with DDX39A and DDX39B. Interacts with TUBB/TUBB5. ISGylated.

It localises to the cytoplasm. The protein resides in the endoplasmic reticulum membrane. The protein localises to the perinuclear region. Functionally, interferon-induced dynamin-like GTPase with antiviral activity. The sequence is that of Interferon-induced GTP-binding protein Mx1 (MX1) from Ovis aries (Sheep).